A 566-amino-acid polypeptide reads, in one-letter code: Membrane protein insertase YidC (566 aa).

Residues 7 to 27 (ILIVALAIVSYVMVLKWNQDY) traverse the membrane as a helical segment. The interval 38 to 72 (ASSTTAPGLPDAPTGTSAANDDIPRAASDTTAPAE) is disordered. 5 consecutive transmembrane segments (helical) span residues 347–367 (LELTVDYGFLWFIAQPIFWLL), 373–393 (LVGNWGWSIIFLTMLIKGIFF), 443–463 (LGGCLPILVQMPVFLSLYWVL), 474–494 (FMLWITDLSIKDPFFILPIIM), and 521–541 (PIIFTFFFLWFPAGLVLYWVV).

Belongs to the OXA1/ALB3/YidC family. Type 1 subfamily. In terms of assembly, interacts with the Sec translocase complex via SecD. Specifically interacts with transmembrane segments of nascent integral membrane proteins during membrane integration.

It localises to the cell inner membrane. Its function is as follows. Required for the insertion and/or proper folding and/or complex formation of integral membrane proteins into the membrane. Involved in integration of membrane proteins that insert both dependently and independently of the Sec translocase complex, as well as at least some lipoproteins. Aids folding of multispanning membrane proteins. This chain is Membrane protein insertase YidC, found in Pseudomonas fluorescens (strain ATCC BAA-477 / NRRL B-23932 / Pf-5).